A 242-amino-acid polypeptide reads, in one-letter code: Triosephosphate isomerase (242 aa).

Residue 9–11 (NWK) coordinates substrate. The Electrophile role is filled by His-99. Glu-169 serves as the catalytic Proton acceptor. Substrate-binding positions include Gly-175, Ser-207, and 228-229 (GG).

This sequence belongs to the triosephosphate isomerase family. In terms of assembly, homodimer.

Its subcellular location is the cytoplasm. It carries out the reaction D-glyceraldehyde 3-phosphate = dihydroxyacetone phosphate. The protein operates within carbohydrate biosynthesis; gluconeogenesis. Its pathway is carbohydrate degradation; glycolysis; D-glyceraldehyde 3-phosphate from glycerone phosphate: step 1/1. Functionally, involved in the gluconeogenesis. Catalyzes stereospecifically the conversion of dihydroxyacetone phosphate (DHAP) to D-glyceraldehyde-3-phosphate (G3P). The chain is Triosephosphate isomerase from Mycoplasma mobile (strain ATCC 43663 / 163K / NCTC 11711) (Mesomycoplasma mobile).